The chain runs to 257 residues: Acetylglutamate kinase (257 aa).

Residues 41–42 (GG), Arg-63, and Asn-155 contribute to the substrate site.

It belongs to the acetylglutamate kinase family. ArgB subfamily.

The protein resides in the cytoplasm. The enzyme catalyses N-acetyl-L-glutamate + ATP = N-acetyl-L-glutamyl 5-phosphate + ADP. It participates in amino-acid biosynthesis; L-arginine biosynthesis; N(2)-acetyl-L-ornithine from L-glutamate: step 2/4. Its function is as follows. Catalyzes the ATP-dependent phosphorylation of N-acetyl-L-glutamate. The polypeptide is Acetylglutamate kinase (Solibacter usitatus (strain Ellin6076)).